The primary structure comprises 115 residues: NAD(P)H-quinone oxidoreductase subunit M (115 aa).

It belongs to the complex I NdhM subunit family. In terms of assembly, NDH-1 can be composed of about 15 different subunits; different subcomplexes with different compositions have been identified which probably have different functions.

Its subcellular location is the cellular thylakoid membrane. It catalyses the reaction a plastoquinone + NADH + (n+1) H(+)(in) = a plastoquinol + NAD(+) + n H(+)(out). It carries out the reaction a plastoquinone + NADPH + (n+1) H(+)(in) = a plastoquinol + NADP(+) + n H(+)(out). In terms of biological role, NDH-1 shuttles electrons from an unknown electron donor, via FMN and iron-sulfur (Fe-S) centers, to quinones in the respiratory and/or the photosynthetic chain. The immediate electron acceptor for the enzyme in this species is believed to be plastoquinone. Couples the redox reaction to proton translocation, and thus conserves the redox energy in a proton gradient. Cyanobacterial NDH-1 also plays a role in inorganic carbon-concentration. This Synechococcus sp. (strain CC9902) protein is NAD(P)H-quinone oxidoreductase subunit M.